The chain runs to 515 residues: MLILWLVGAFIVLIQWIYRLNRDYCILGFFAKRIRTKNGQNPESIAPLVKGSTIFANSFDLYGKDHSGVFEHSRDCAKKLGKSYAEYAMGTAIYNVIDADSAERVLNDPNLINKGTIYDFLHPFLRTGLLTSTGKKWHARRKMLSPTFHFNILNQFQEIFITESLKFLEQFKGNDEAIISLNEVIPRFTLNSICETAMGVKLDEMAEKGDRYRENFRQIEECFIRRMSNPLLWSDTLFKMFAEKDYASALDVVHGFSSEIIAKRRDQLNDEIDSRGNTQTAEDELFTSKKRFAMLDTLILAEKDGLIDHIGICEEVDTLMFEGYDTTSIGLMFGLMNMSLYPEEQEKCYQEIQANIDDELNILNIGQLNKLKNLEYFIKETMRLFPSVPAMGRETTRETELSNGLILPKGSQIFVHVFDIHRNPEYWDSPEEFRPERFLPENSQNRHTYAYIPFSAGQRNCIGQKFAMQEMKTLMVALLKQFQILPEIDPKTIVFQTGLTLRTKNQIHVKLVRRK.

Glu-322 and Cys-461 together coordinate heme.

This sequence belongs to the cytochrome P450 family. It depends on heme as a cofactor.

Its subcellular location is the endoplasmic reticulum membrane. It localises to the microsome membrane. May be involved in the metabolism of insect hormones and in the breakdown of synthetic insecticides. This chain is Probable cytochrome P450 4p3 (Cyp4p3), found in Drosophila melanogaster (Fruit fly).